The chain runs to 48 residues: ATP synthase protein 8 (48 aa).

A helical membrane pass occupies residues 4-24; the sequence is LVPFFFVNQVVFAFIVLTVLI.

This sequence belongs to the ATPase protein 8 family. F-type ATPases have 2 components, CF(1) - the catalytic core - and CF(0) - the membrane proton channel.

The protein localises to the mitochondrion membrane. In terms of biological role, mitochondrial membrane ATP synthase (F(1)F(0) ATP synthase or Complex V) produces ATP from ADP in the presence of a proton gradient across the membrane which is generated by electron transport complexes of the respiratory chain. F-type ATPases consist of two structural domains, F(1) - containing the extramembraneous catalytic core and F(0) - containing the membrane proton channel, linked together by a central stalk and a peripheral stalk. During catalysis, ATP synthesis in the catalytic domain of F(1) is coupled via a rotary mechanism of the central stalk subunits to proton translocation. Part of the complex F(0) domain. Minor subunit located with subunit a in the membrane. This is ATP synthase protein 8 (atp8) from Emericella nidulans (Aspergillus nidulans).